The following is a 449-amino-acid chain: Glycerol-3-phosphate acyltransferase 3 (449 aa).

A run of 3 helical transmembrane segments spans residues 9 to 29, 146 to 166, and 170 to 190; these read FVLL…PAMF, ISVR…CVLL, and ITLA…VGFL. Residues 238–243 carry the HXXXXD motif motif; that stretch reads HTSPID. The helical transmembrane segment at 358 to 378 threads the bilayer; the sequence is MVSYILRMMTSWAIVCNVWYL.

Belongs to the 1-acyl-sn-glycerol-3-phosphate acyltransferase family.

Its subcellular location is the endoplasmic reticulum membrane. The enzyme catalyses sn-glycerol 3-phosphate + an acyl-CoA = a 1-acyl-sn-glycero-3-phosphate + CoA. It catalyses the reaction a 1-acyl-sn-glycero-3-phosphate + an acyl-CoA = a 1,2-diacyl-sn-glycero-3-phosphate + CoA. It carries out the reaction dodecanoyl-CoA + sn-glycerol 3-phosphate = 1-dodecanoyl-sn-glycerol 3-phosphate + CoA. The catalysed reaction is sn-glycerol 3-phosphate + hexadecanoyl-CoA = 1-hexadecanoyl-sn-glycero-3-phosphate + CoA. The enzyme catalyses sn-glycerol 3-phosphate + (9Z)-octadecenoyl-CoA = 1-(9Z-octadecenoyl)-sn-glycero-3-phosphate + CoA. It catalyses the reaction (9Z,12Z)-octadecadienoyl-CoA + sn-glycerol 3-phosphate = 1-(9Z,12Z)-octadecadienoyl-sn-glycero-3-phosphate + CoA. It carries out the reaction 1-tetradecanoyl-sn-glycerol 3-phosphate + (9Z)-octadecenoyl-CoA = 1-tetradecanoyl-2-(9Z)-octadecenoyl-sn-glycero-3-phosphate + CoA. The catalysed reaction is 1-hexadecanoyl-sn-glycero-3-phosphate + (9Z)-octadecenoyl-CoA = 1-hexadecanoyl-2-(9Z-octadecenoyl)-sn-glycero-3-phosphate + CoA. The enzyme catalyses 1-(9Z-octadecenoyl)-sn-glycero-3-phosphate + (9Z)-octadecenoyl-CoA = 1,2-di-(9Z-octadecenoyl)-sn-glycero-3-phosphate + CoA. It catalyses the reaction 1-(6Z,9Z,12Z-octadecatrienoyl)-sn-glycero-3-phosphate + (9Z)-octadecenoyl-CoA = (6Z,9Z,12Z)-octadecatrienoyl-2-(9Z)-octadecenoyl-sn-glycero-3-phosphate + CoA. It carries out the reaction 1-(9Z,12Z,15Z)-octadecatrienoyl-sn-glycero-3-phosphate + (9Z)-octadecenoyl-CoA = 1-(9Z,12Z,15Z)-octadecatrienoyl-2-(9Z)-octadecenoyl-sn-glycero-3-phosphate + CoA. The catalysed reaction is 1-(9Z-octadecenoyl)-sn-glycero-3-phosphate + tetradecanoyl-CoA = 1-(9Z)-octadecenoyl-2-tetradecanoyl-sn-glycero-3-phosphate + CoA. The enzyme catalyses 1-(9Z-octadecenoyl)-sn-glycero-3-phosphate + hexadecanoyl-CoA = 1-(9Z)-octadecenoyl-2-hexadecanoyl-sn-glycero-3-phosphate + CoA. It catalyses the reaction 1-(9Z-octadecenoyl)-sn-glycero-3-phosphate + octadecanoyl-CoA = 1-(9Z-octadecenoyl)-2-octadecanoyl-sn-glycero-3-phosphate + CoA. It carries out the reaction 1-(9Z-octadecenoyl)-sn-glycero-3-phosphate + (9Z,12Z)-octadecadienoyl-CoA = 1-(9Z)-octadecenoyl-2-(9Z,12Z)-octadecadienoyl-sn-glycero-3-phosphate + CoA. The catalysed reaction is 1-(5Z,8Z,11Z,14Z-eicosatetraenoyl)-sn-glycero-3-phosphate + (9Z)-octadecenoyl-CoA = 1-(5Z,8Z,11Z,14Z)-eicosatetraenoyl-2-(9Z)-octadecenoyl-sn-glycero-3-phosphate + CoA. It participates in glycerolipid metabolism; triacylglycerol biosynthesis. Its pathway is phospholipid metabolism; CDP-diacylglycerol biosynthesis; CDP-diacylglycerol from sn-glycerol 3-phosphate: step 1/3. Converts glycerol-3-phosphate to 1-acyl-sn-glycerol-3-phosphate (lysophosphatidic acid or LPA) by incorporating an acyl moiety at the sn-1 position of the glycerol backbone. Also converts LPA into 1,2-diacyl-sn-glycerol-3-phosphate (phosphatidic acid or PA) by incorporating an acyl moiety at the sn-2 position of the glycerol backbone. Protects cells against lipotoxicity. The protein is Glycerol-3-phosphate acyltransferase 3 of Danio rerio (Zebrafish).